We begin with the raw amino-acid sequence, 172 residues long: C-phycocyanin beta chain (172 aa).

The residue at position 72 (Asn72) is an N4-methylasparagine. Cys82 and Cys153 together coordinate (2R,3E)-phycocyanobilin.

It belongs to the phycobiliprotein family. Heterodimer of an alpha and a beta subunit, which further assembles into trimers and the trimers into hexamers. The basic functional unit of phycobiliproteins is a ring-shaped hexamer formed from two back-to-back trimers contacting via the alpha chain subunits. The trimers are composed of alpha/beta subunit heterodimers arranged around a three-fold axis of symmetry. The phycoerythrins also contain a gamma subunit which is located in the center of the hexamer. In terms of processing, contains two covalently linked bilin chromophores.

It localises to the plastid. The protein resides in the chloroplast thylakoid membrane. Its function is as follows. Light-harvesting photosynthetic bile pigment-protein from the phycobiliprotein complex (phycobilisome, PBS). Phycocyanin is the major phycobiliprotein in the PBS rod. In Pyropia haitanensis (Red seaweed), this protein is C-phycocyanin beta chain (cpcB).